We begin with the raw amino-acid sequence, 408 residues long: Cytotoxic granule-associated RNA binding protein tiar-1 (408 aa).

RRM domains lie at 46-121 (RTLY…WAVE), 135-213 (FHVF…WATR), and 241-312 (TSVY…WGKT).

Expressed in the germline and also in somatic tissues. Expressed in Ggonads and oocytes. Expression is slightly reduced in the most proximal oocytes, especially the -1 oocyte. Aggregates mostly in the head neurons, muscles, intestine, vulval and hypodermal cells during heat shock. Expressed only in the intestine as a response to heat shock, starvation and dietary restriction.

The protein localises to the cytoplasm. The protein resides in the nucleus. Its subcellular location is the stress granule. Functionally, acts downstream of ced-9 in the induction of germline apoptosis under different stress conditions including starvation, osmotic, oxidative, heat shock and UV stress. Plays a role in the formation of stress granules in response to heat shock and oxidative stress but not in response to osmotic stress. Required for the formation of stress granules in the core gonad but may not play a critical role in this process in the oocytes. Plays an important role in the formation of stress granules in the embryo. Protects female germ cells and embryos from heat shock. In Caenorhabditis elegans, this protein is Cytotoxic granule-associated RNA binding protein tiar-1.